An 83-amino-acid polypeptide reads, in one-letter code: Three-finger toxin W-IV (83 aa).

An N-terminal signal peptide occupies residues 1–21 (MKTLLLTLVVVTIVCLDLGHT). Disulfide bonds link Cys-24–Cys-45, Cys-38–Cys-62, Cys-64–Cys-75, and Cys-76–Cys-81.

It belongs to the three-finger toxin family. Short-chain subfamily. Type I alpha-neurotoxin sub-subfamily. Expressed by the venom gland.

It localises to the secreted. Functionally, binds to muscle nicotinic acetylcholine receptor (nAChR) and inhibit acetylcholine from binding to the receptor, thereby impairing neuromuscular transmission. The polypeptide is Three-finger toxin W-IV (Walterinnesia aegyptia (Desert black snake)).